The primary structure comprises 297 residues: Dehydrodolichyl diphosphate synthase complex subunit Nus1 (297 aa).

2 helical membrane passes run 7 to 26 and 40 to 56; these read LVWRVLHALLCLHLTLTSWL and CCRAASAAVLAPLGFTL. The span at 63-73 shows a compositional bias: basic residues; sequence GRNRRHHRHPH. The tract at residues 63-86 is disordered; sequence GRNRRHHRHPHGGPGPGPGPAATH. Residues 121-139 traverse the membrane as a helical segment; it reads IASLVVWCMAVGISYISVY. Asn-148 and Asn-275 each carry an N-linked (GlcNAc...) asparagine glycan. The RXG motif; crucial for prenyltransferase activity motif lies at 294–296; sequence RLG. Isopentenyl diphosphate-binding residues include Leu-295 and Gly-296.

It belongs to the UPP synthase family. The active dehydrodolichyl diphosphate synthase complex is a heterotetramer composed of a dimer of heterodimer of DHDDS and NUS1. Interacts with NPC2. Requires Mg(2+) as cofactor. As to expression, highly expressed in heart, liver, kidney and pancreas.

The protein localises to the endoplasmic reticulum membrane. It carries out the reaction n isopentenyl diphosphate + (2E,6E)-farnesyl diphosphate = a di-trans,poly-cis-polyprenyl diphosphate + n diphosphate. The protein operates within protein modification; protein glycosylation. It functions in the pathway lipid metabolism. Its function is as follows. With DHDDS, forms the dehydrodolichyl diphosphate synthase (DDS) complex, an essential component of the dolichol monophosphate (Dol-P) biosynthetic machinery. Both subunits contribute to enzymatic activity, i.e. condensation of multiple copies of isopentenyl pyrophosphate (IPP) to farnesyl pyrophosphate (FPP) to produce dehydrodolichyl diphosphate (Dedol-PP), a precursor of dolichol phosphate which is utilized as a sugar carrier in protein glycosylation in the endoplasmic reticulum (ER). Synthesizes long-chain polyprenols, mostly of C95 and C100 chain length. Regulates the glycosylation and stability of nascent NPC2, thereby promoting trafficking of LDL-derived cholesterol. Acts as a specific receptor for the N-terminus of Nogo-B, a neural and cardiovascular regulator. The chain is Dehydrodolichyl diphosphate synthase complex subunit Nus1 from Mus musculus (Mouse).